A 1146-amino-acid polypeptide reads, in one-letter code: Killer toxin subunits alpha/beta (1146 aa).

A signal peptide spans 1-17 (MNIFYIFLFLLSFVQGL). The propeptide occupies 18–29 (EHTHRRGSLVKR). LysM domains lie at 205 to 234 (ADQS…QPIC) and 254 to 303 (KTYK…NLCV). The Chitin-binding type-1 domain maps to 316-372 (IAECGPLAPGEKYNAKCPLNACCSEFGFCGLTKDYCDKKSSTTGAPGTDGCFSNCGY). 4 cysteine pairs are disulfide-bonded: C319/C338, C332/C344, C337/C351, and C366/C370. The GH18 domain occupies 383 to 735 (FKKIAYWLDA…DDTEDPFDEE (353 aa)). Chitin is bound by residues I424 and 447–450 (GGWD). E495 functions as the Proton donor in the catalytic mechanism. Chitin is bound by residues Y496, 562-565 (MTYD), and W707. N-linked (GlcNAc...) asparagine glycosylation is found at N771, N858, N868, N876, and N1117.

Belongs to the glycosyl hydrolase 18 family. As to quaternary structure, the killer toxin is composed of three subunits: alpha, beta and gamma. RF2 is potentially split by membrane-bound basic amino acid-specific peptidase to yield the alpha and beta subunits.

The enzyme catalyses Random endo-hydrolysis of N-acetyl-beta-D-glucosaminide (1-&gt;4)-beta-linkages in chitin and chitodextrins.. In terms of biological role, the alpha subunit is a potent exochitinase. Along with the beta subunit it plays a role in the initial interaction of the toxin with sensitive cells and allow the gamma subunit (the active toxin) to gain entry into the cell. This is Killer toxin subunits alpha/beta from Kluyveromyces lactis (strain ATCC 8585 / CBS 2359 / DSM 70799 / NBRC 1267 / NRRL Y-1140 / WM37) (Yeast).